Consider the following 327-residue polypeptide: Probable cell division protein WhiA (327 aa).

The segment at residues 275-308 is a DNA-binding region (H-T-H motif); that stretch reads SLEELGRLADPQMTKDAVAGRIRRLLTTADKRAR.

This sequence belongs to the WhiA family.

Its function is as follows. Involved in cell division and chromosome segregation. This chain is Probable cell division protein WhiA, found in Corynebacterium efficiens (strain DSM 44549 / YS-314 / AJ 12310 / JCM 11189 / NBRC 100395).